The primary structure comprises 233 residues: Large ribosomal subunit protein uL1 (233 aa).

This sequence belongs to the universal ribosomal protein uL1 family. As to quaternary structure, part of the 50S ribosomal subunit.

Functionally, binds directly to 23S rRNA. The L1 stalk is quite mobile in the ribosome, and is involved in E site tRNA release. Protein L1 is also a translational repressor protein, it controls the translation of the L11 operon by binding to its mRNA. This Syntrophotalea carbinolica (strain DSM 2380 / NBRC 103641 / GraBd1) (Pelobacter carbinolicus) protein is Large ribosomal subunit protein uL1.